The sequence spans 181 residues: Probable cobalt-precorrin-6B C(15)-methyltransferase (decarboxylating) (181 aa).

Residues Thr-16, 40-44, Asp-61, and Ala-89 contribute to the S-adenosyl-L-methionine site; that span reads GCGSG.

Belongs to the methyltransferase superfamily. Archaeal-type CbiT family.

It carries out the reaction Co-precorrin-6B + S-adenosyl-L-methionine = Co-precorrin-7 + S-adenosyl-L-homocysteine + CO2. It participates in cofactor biosynthesis; adenosylcobalamin biosynthesis; cob(II)yrinate a,c-diamide from sirohydrochlorin (anaerobic route): step 8/10. Catalyzes the methylation of C-15 in cobalt-precorrin-6B followed by the decarboxylation of C-12 to form cobalt-precorrin-7. This Methanococcus maripaludis (strain C5 / ATCC BAA-1333) protein is Probable cobalt-precorrin-6B C(15)-methyltransferase (decarboxylating).